Here is a 159-residue protein sequence, read N- to C-terminus: Ribosomal RNA large subunit methyltransferase H (159 aa).

S-adenosyl-L-methionine contacts are provided by residues Leu-76, Gly-108, and 127–132 (FGLLTL).

This sequence belongs to the RNA methyltransferase RlmH family. In terms of assembly, homodimer.

The protein resides in the cytoplasm. It catalyses the reaction pseudouridine(1915) in 23S rRNA + S-adenosyl-L-methionine = N(3)-methylpseudouridine(1915) in 23S rRNA + S-adenosyl-L-homocysteine + H(+). Its function is as follows. Specifically methylates the pseudouridine at position 1915 (m3Psi1915) in 23S rRNA. This Streptococcus pyogenes serotype M12 (strain MGAS2096) protein is Ribosomal RNA large subunit methyltransferase H.